We begin with the raw amino-acid sequence, 297 residues long: tRNA dimethylallyltransferase (297 aa).

15 to 22 (GPTASGKS) provides a ligand contact to ATP. 17 to 22 (TASGKS) provides a ligand contact to substrate. Interaction with substrate tRNA stretches follow at residues 40-43 (DSMQ) and 164-168 (QRIVR).

It belongs to the IPP transferase family. Monomer. Mg(2+) serves as cofactor.

It carries out the reaction adenosine(37) in tRNA + dimethylallyl diphosphate = N(6)-dimethylallyladenosine(37) in tRNA + diphosphate. Functionally, catalyzes the transfer of a dimethylallyl group onto the adenine at position 37 in tRNAs that read codons beginning with uridine, leading to the formation of N6-(dimethylallyl)adenosine (i(6)A). This chain is tRNA dimethylallyltransferase, found in Rhizobium etli (strain ATCC 51251 / DSM 11541 / JCM 21823 / NBRC 15573 / CFN 42).